The chain runs to 206 residues: Pyridoxine/pyridoxamine 5'-phosphate oxidase (206 aa).

FMN is bound by residues 53-58, 68-69, Lys-75, and Gln-97; these read RMVLLK and YT. Lys-58 is a binding site for substrate. Tyr-115, Arg-119, and Ser-123 together coordinate substrate. FMN is bound by residues 132 to 133 and Trp-177; that span reads QS. 183–185 is a binding site for substrate; sequence RLH. Arg-187 lines the FMN pocket.

Belongs to the pyridoxamine 5'-phosphate oxidase family. In terms of assembly, homodimer. FMN serves as cofactor.

The enzyme catalyses pyridoxamine 5'-phosphate + O2 + H2O = pyridoxal 5'-phosphate + H2O2 + NH4(+). It catalyses the reaction pyridoxine 5'-phosphate + O2 = pyridoxal 5'-phosphate + H2O2. The protein operates within cofactor metabolism; pyridoxal 5'-phosphate salvage; pyridoxal 5'-phosphate from pyridoxamine 5'-phosphate: step 1/1. Its pathway is cofactor metabolism; pyridoxal 5'-phosphate salvage; pyridoxal 5'-phosphate from pyridoxine 5'-phosphate: step 1/1. Catalyzes the oxidation of either pyridoxine 5'-phosphate (PNP) or pyridoxamine 5'-phosphate (PMP) into pyridoxal 5'-phosphate (PLP). This is Pyridoxine/pyridoxamine 5'-phosphate oxidase from Rhizobium etli (strain ATCC 51251 / DSM 11541 / JCM 21823 / NBRC 15573 / CFN 42).